A 959-amino-acid chain; its full sequence is Protein moonraker (959 aa).

Residues 124 to 156 form a disordered region; that stretch reads LPHSSHKGMHTKVERKDSKSQDVCHCSHQPSRV. Over residues 134–145 the composition is skewed to basic and acidic residues; sequence TKVERKDSKSQD. Serine 279 is modified (phosphoserine). Residues 456–470 show a composition bias toward basic and acidic residues; it reads EEAPRIEDNGTDFKD. Disordered stretches follow at residues 456–560 and 572–610; these read EEAP…ASPK and RDAA…AESS. Positions 515–533 are enriched in polar residues; sequence PNQPYSKSRLQQTTVSSRL. Positions 547 to 558 are enriched in pro residues; that stretch reads WIPPNPTSPPAS. The stretch at 582–674 forms a coiled coil; that stretch reads QEDIHKESQL…TQLADKVEEA (93 aa). Over residues 583 to 599 the composition is skewed to basic and acidic residues; sequence EDIHKESQLRGDAEQEA. At serine 691 the chain carries Phosphoserine. Disordered stretches follow at residues 692 to 721 and 848 to 883; these read SVEA…SDVP and LDES…PLSV. The segment covering 707-717 has biased composition (low complexity); it reads AAAAAQPAEQA. Residues 857–874 show a composition bias toward basic and acidic residues; the sequence is GSEKREAPLPLSREDLHQ. A necessary and sufficient for CEP20-binding region spans residues 877–959; sequence GQTPLSVPPR…FTSEFLEAAA (83 aa).

As to quaternary structure, interacts with CEP63 and WDR62. Forms a complex with OFD1 and CEP20/FOR20. Interacts with PCM1.

The protein localises to the cytoplasm. It is found in the cytoskeleton. The protein resides in the microtubule organizing center. It localises to the centrosome. Its subcellular location is the centriolar satellite. Its function is as follows. Involved in centriole duplication. Positively regulates CEP63 centrosomal localization. Required for WDR62 centrosomal localization and promotes the centrosomal localization of CDK2. May play a role in cilium assembly. The sequence is that of Protein moonraker (Kiaa0753) from Mus musculus (Mouse).